Here is a 116-residue protein sequence, read N- to C-terminus: Iron-sulfur cluster insertion protein ErpA (116 aa).

Iron-sulfur cluster contacts are provided by Cys44, Cys108, and Cys110.

The protein belongs to the HesB/IscA family. As to quaternary structure, homodimer. Requires iron-sulfur cluster as cofactor.

Functionally, required for insertion of 4Fe-4S clusters for at least IspG. This chain is Iron-sulfur cluster insertion protein ErpA, found in Shewanella baltica (strain OS223).